Reading from the N-terminus, the 260-residue chain is Acetylglutamate kinase (260 aa).

Substrate is bound by residues 46-47 (GG), arginine 68, and asparagine 160.

This sequence belongs to the acetylglutamate kinase family. ArgB subfamily.

It localises to the cytoplasm. It catalyses the reaction N-acetyl-L-glutamate + ATP = N-acetyl-L-glutamyl 5-phosphate + ADP. It functions in the pathway amino-acid biosynthesis; L-arginine biosynthesis; N(2)-acetyl-L-ornithine from L-glutamate: step 2/4. In terms of biological role, catalyzes the ATP-dependent phosphorylation of N-acetyl-L-glutamate. In Shewanella baltica (strain OS223), this protein is Acetylglutamate kinase.